Reading from the N-terminus, the 190-residue chain is Xanthine phosphoribosyltransferase (190 aa).

Residues leucine 20 and asparagine 27 each coordinate xanthine. Position 128–132 (128–132 (ANGKA)) interacts with 5-phospho-alpha-D-ribose 1-diphosphate. Lysine 156 is a xanthine binding site.

This sequence belongs to the purine/pyrimidine phosphoribosyltransferase family. Xpt subfamily. As to quaternary structure, homodimer.

The protein localises to the cytoplasm. The catalysed reaction is XMP + diphosphate = xanthine + 5-phospho-alpha-D-ribose 1-diphosphate. It participates in purine metabolism; XMP biosynthesis via salvage pathway; XMP from xanthine: step 1/1. Converts the preformed base xanthine, a product of nucleic acid breakdown, to xanthosine 5'-monophosphate (XMP), so it can be reused for RNA or DNA synthesis. This Finegoldia magna (strain ATCC 29328 / DSM 20472 / WAL 2508) (Peptostreptococcus magnus) protein is Xanthine phosphoribosyltransferase.